The following is a 628-amino-acid chain: MRLTSGIFHAAIAVAAVGAVLPEGPSSSKTHRNEYARRMLGSSFGIPKNQTFDYLVIGGGTAGLTIATRLAEQGVGSVAVIEAGGFYELNNGNLSQIPAQDAFYVGTDLDDWQPGIDWGFHTTPQAGAYDRVSHYARGKCLGGSSARNYMAYQRGTKAAHQRWADTVGDSSYTWEQFLPFFEKSLHFTPANDALRGANASVVSDPSVLGNGDGPLSVTYPHYAQAFATWAKHAFIEIGLQIRSGFQSGALLGQSYGLYTINATTMHRESSETSFLRKGLADPNLTVFQSALAKRIRFQDKRAVGVDVETMGRAYTLSARKEIVLSAGAFQSPQLLMVSGVGPAATLKAHNIPLVADRPGVGQNMQDHIIYAPSYRVNVITQSALLNEEFEAQANRDYNERAAGIYANPTSDILAWEKIPEPKRSAWFSNHTRQVLAEYPDDWPEVEFLTMGGYFGYQRNYIRDNPSDGYNYASLAVSLCTPRSRGNVTITSPDAGVPPVINPNWLTDPVDVELAVAAFKRTRDFFNTTAIKPILIGPEYFPGSQVATDAEILDHVRKSFDTIFHASCTCAMGLANDTQAVVDSKARVIGVEALRVVDASALPFLPPGHPQSTLYALAEKIACEISGNC.

Positions 1–19 (MRLTSGIFHAAIAVAAVGA) are cleaved as a signal peptide. The N-linked (GlcNAc...) asparagine glycan is linked to asparagine 49. FAD is bound by residues 61–62 (TA) and 82–83 (EA). Asparagine 93 carries N-linked (GlcNAc...) asparagine glycosylation. An FAD-binding site is contributed by 148–151 (NYMA). Asparagine 198, asparagine 261, asparagine 283, asparagine 429, asparagine 486, and asparagine 526 each carry an N-linked (GlcNAc...) asparagine glycan. Histidine 564 acts as the Proton acceptor in catalysis. The N-linked (GlcNAc...) asparagine glycan is linked to asparagine 575. Residues alanine 598 and 609–610 (PQ) contribute to the FAD site.

The protein belongs to the GMC oxidoreductase family. FAD serves as cofactor.

It localises to the cytoplasm. It is found in the cell cortex. The protein localises to the vacuole. The protein resides in the secreted. Its subcellular location is the cell wall. It catalyses the reaction (E)-ascladiol + A = patulin + AH2. Its pathway is mycotoxin biosynthesis; patulin biosynthesis. Its function is as follows. Patulin synthase; part of the gene cluster that mediates the biosynthesis of patulin, an acetate-derived tetraketide mycotoxin produced by several fungal species that shows antimicrobial properties against several bacteria. PatE catalyzes the last step of the pathway which is the conversion of E-ascladiol to patulin. The pathway begins with the synthesis of 6-methylsalicylic acid by the polyketide synthase (PKS) patK via condensation of acetate and malonate units. The 6-methylsalicylic acid decarboxylase patG then catalyzes the decarboxylation of 6-methylsalicylic acid to yield m-cresol (also known as 3-methylphenol). These first reactions occur in the cytosol. The intermediate m-cresol is then transported into the endoplasmic reticulum where the cytochrome P450 monooxygenase patH converts it to m-hydroxybenzyl alcohol, which is further converted to gentisyl alcohol by the cytochrome P450 monooxygenase patI. The oxidoreductases patJ and patO further convert gentisyl alcohol to isoepoxydon in the vacuole. PatN catalyzes then the transformation of isoepoxydon into phyllostine. The cluster protein patF is responsible for the conversion from phyllostine to neopatulin whereas the alcohol dehydrogenase patD converts neopatulin to E-ascladiol. The steps between isoepoxydon and E-ascladiol occur in the cytosol, and E-ascladiol is probably secreted to the extracellular space by one of the cluster-specific transporters patC or patM. Finally, the secreted patulin synthase patE catalyzes the conversion of E-ascladiol to patulin. The sequence is that of Patulin synthase from Penicillium expansum (Blue mold rot fungus).